The primary structure comprises 31 residues: Photosystem II reaction center protein T (31 aa).

Residues 3-23 (SAAYILVLALALGVIFFAIAF) traverse the membrane as a helical segment.

The protein belongs to the PsbT family. In terms of assembly, PSII is composed of 1 copy each of membrane proteins PsbA, PsbB, PsbC, PsbD, PsbE, PsbF, PsbH, PsbI, PsbJ, PsbK, PsbL, PsbM, PsbT, PsbX, PsbY, PsbZ, Psb30/Ycf12, peripheral proteins PsbO, CyanoQ (PsbQ), PsbU, PsbV and a large number of cofactors. It forms dimeric complexes.

Its subcellular location is the cellular thylakoid membrane. Found at the monomer-monomer interface of the photosystem II (PS II) dimer, plays a role in assembly and dimerization of PSII. PSII is a light-driven water plastoquinone oxidoreductase, using light energy to abstract electrons from H(2)O, generating a proton gradient subsequently used for ATP formation. In Trichodesmium erythraeum (strain IMS101), this protein is Photosystem II reaction center protein T.